The following is a 136-amino-acid chain: NADPH-dependent 7-cyano-7-deazaguanine reductase (136 aa).

Residue C50 is the Thioimide intermediate of the active site. Catalysis depends on D57, which acts as the Proton donor. Residues 72 to 74 and 91 to 92 each bind substrate; these read YEL and HE.

It belongs to the GTP cyclohydrolase I family. QueF type 1 subfamily.

It localises to the cytoplasm. The catalysed reaction is 7-aminomethyl-7-carbaguanine + 2 NADP(+) = 7-cyano-7-deazaguanine + 2 NADPH + 3 H(+). Its pathway is tRNA modification; tRNA-queuosine biosynthesis. Catalyzes the NADPH-dependent reduction of 7-cyano-7-deazaguanine (preQ0) to 7-aminomethyl-7-deazaguanine (preQ1). The sequence is that of NADPH-dependent 7-cyano-7-deazaguanine reductase from Prochlorococcus marinus (strain AS9601).